A 463-amino-acid chain; its full sequence is Probable transport protein HsrA (463 aa).

14 helical membrane-spanning segments follow: residues 10–30 (GLAW…TILN), 49–69 (MAII…AWAA), 82–102 (VFTF…ESLI), 107–127 (IQGI…IQAV), 139–159 (MATA…WLVI), 165–185 (WIFL…GSVM), 197–217 (WTGF…LDLL), 225–245 (SVTY…CGYA), 267–287 (IIAN…LPLM), 298–318 (MSGW…ILIG), 328–348 (TTLI…AWLD), 354–374 (TWII…FTSI), 393–413 (VLSI…SIIL), and 429–449 (AFSY…WSLM).

Belongs to the major facilitator superfamily. EmrB family.

The protein localises to the cell inner membrane. The sequence is that of Probable transport protein HsrA (hsrA) from Haemophilus influenzae (strain ATCC 51907 / DSM 11121 / KW20 / Rd).